Consider the following 378-residue polypeptide: Glutamate 5-kinase (378 aa).

Residue Lys14 coordinates ATP. Substrate contacts are provided by Ser54, Asp141, and Asn153. 173–174 (SD) lines the ATP pocket. In terms of domain architecture, PUA spans 279-356 (AGRLTVDAGA…DEISAILGYD (78 aa)).

The protein belongs to the glutamate 5-kinase family.

The protein resides in the cytoplasm. It catalyses the reaction L-glutamate + ATP = L-glutamyl 5-phosphate + ADP. It functions in the pathway amino-acid biosynthesis; L-proline biosynthesis; L-glutamate 5-semialdehyde from L-glutamate: step 1/2. Functionally, catalyzes the transfer of a phosphate group to glutamate to form L-glutamate 5-phosphate. This is Glutamate 5-kinase from Brucella canis (strain ATCC 23365 / NCTC 10854 / RM-666).